An 836-amino-acid chain; its full sequence is Eukaryotic translation initiation factor 3 subunit C (836 aa).

The tract at residues 1–97 (MSRFFVSGYD…RRVVKSAKEK (97 aa)) is disordered. Acidic residues predominate over residues 13–55 (SSSEEEDLLTSSEEELMSSEQESDSEFDDEFANDDDSDSSDSD). The span at 86–97 (EGRRVVKSAKEK) shows a compositional bias: basic and acidic residues. Residues 586 to 761 (FHMHINLELL…KSINFVSSEH (176 aa)) enclose the PCI domain. A disordered region spans residues 783-817 (DKNEKTASNGHGRKTTQQQQQQQQKEQREQTHDEN). Residues 797 to 806 (TTQQQQQQQQ) show a composition bias toward low complexity. Positions 807–817 (KEQREQTHDEN) are enriched in basic and acidic residues.

It belongs to the eIF-3 subunit C family. Component of the eukaryotic translation initiation factor 3 (eIF-3) complex.

The protein resides in the cytoplasm. Its function is as follows. Component of the eukaryotic translation initiation factor 3 (eIF-3) complex, which is involved in protein synthesis of a specialized repertoire of mRNAs and, together with other initiation factors, stimulates binding of mRNA and methionyl-tRNAi to the 40S ribosome. The eIF-3 complex specifically targets and initiates translation of a subset of mRNAs involved in cell proliferation. The sequence is that of Eukaryotic translation initiation factor 3 subunit C from Meyerozyma guilliermondii (strain ATCC 6260 / CBS 566 / DSM 6381 / JCM 1539 / NBRC 10279 / NRRL Y-324) (Yeast).